The following is a 198-amino-acid chain: Recombination protein RecR (198 aa).

Residues 57–72 form a C4-type zinc finger; that stretch reads CSVCGHITDQDPCYIC. The Toprim domain maps to 80 to 175; sequence SVICVVQDPK…KLSRIAHGLP (96 aa).

The protein belongs to the RecR family.

May play a role in DNA repair. It seems to be involved in an RecBC-independent recombinational process of DNA repair. It may act with RecF and RecO. This chain is Recombination protein RecR, found in Bacillus licheniformis (strain ATCC 14580 / DSM 13 / JCM 2505 / CCUG 7422 / NBRC 12200 / NCIMB 9375 / NCTC 10341 / NRRL NRS-1264 / Gibson 46).